Here is a 417-residue protein sequence, read N- to C-terminus: Odorant receptor Or1 (417 aa).

Residues 1–2 (MK) are Cytoplasmic-facing. A helical membrane pass occupies residues 3–23 (LNKLNPRWDAYDRRDSFWLQL). Residues 24 to 45 (LCLKYLGLWPPEDTDQATRNRY) are Extracellular-facing. Residues 46–66 (IAYGWALRIMFLHLYALTQAL) traverse the membrane as a helical segment. At 67-73 (YFKDVKD) the chain is on the cytoplasmic side. Residues 74-94 (INDIANALFVLMTQVTLIYKL) form a helical membrane-spanning segment. Topologically, residues 95-133 (EKFNYNIARIQACLRKLNCTLYHPKQREEFSPVLQSMSG) are extracellular. N112 carries an N-linked (GlcNAc...) asparagine glycan. The helical transmembrane segment at 134–154 (VFWLMIFLMFVAIFTIIMWVM) threads the bilayer. The Cytoplasmic segment spans residues 155-178 (SPAFDNERRLPVPAWFPVDYHHSD). A helical membrane pass occupies residues 179-199 (IVYGVLFLYQTIGIVMSATYN). Topologically, residues 200–284 (FSTDTMFSGL…ILSFGDEVQD (85 aa)) are extracellular. Residues 285–305 (IFQGSIFAQVCASVIIICMTL) traverse the membrane as a helical segment. At 306-317 (LQATGDDVTMAD) the chain is on the cytoplasmic side. Residues 318-338 (LLGCGFYLLVMTSQVFIFCYV) form a helical membrane-spanning segment. Residues 339-417 (GNEISYTTDK…LAVLQSMESE (79 aa)) lie on the Extracellular side of the membrane.

The protein belongs to the insect chemoreceptor superfamily. Heteromeric odorant receptor channel (TC 1.A.69) family. Or2a subfamily. In terms of tissue distribution, female-specific antennae and maxillary palp expression.

It is found in the cell membrane. Odorant receptor which plays a critical role in the anthropophilic host-seeking behavior; establishes the host preference to transmit malaria. May participate in the phenomenon of decreased host-seeking behavior in disease vector mosquitoes after blood feeding. The sequence is that of Odorant receptor Or1 (OR1) from Anopheles gambiae (African malaria mosquito).